The sequence spans 1549 residues: Structural maintenance of chromosomes protein 4 (1549 aa).

Residues 1–78 (MPPKTSAAPP…LFSLQLPSRP (78 aa)) form a disordered region. Positions 26–36 (KPQKKTTKPVN) are enriched in basic residues. Over residues 37–59 (RHKEGSKDPEEELQRAVNEKFDG) the composition is skewed to basic and acidic residues. 121-128 (GPNGSGKS) is an ATP binding site. Positions 326–604 (MKLEQRRRQR…QNSSCSSSNK (279 aa)) form a coiled coil. Composition is skewed to basic and acidic residues over residues 396–407 (LSDLGTEETRRK) and 420–444 (AEAE…AERK). Disordered regions lie at residues 396-444 (LSDL…AERK) and 460-485 (KTAN…EEQK). In terms of domain architecture, SMC hinge spans 619 to 734 (KSFHGRLGDL…GDSTQEAQRM (116 aa)). Coiled coils occupy residues 786–1058 (KAAE…KVNR) and 1144–1182 (EKIN…SIKA). The segment covering 1440 to 1459 (IQTTRDVTSRPQSKATTSGD) has biased composition (polar residues). The segment at 1440–1549 (IQTTRDVTSR…AIVDDDDDME (110 aa)) is disordered. The span at 1460-1474 (GTERPASRSASRPES) shows a compositional bias: basic and acidic residues. Polar residues predominate over residues 1510 to 1523 (TPPSKRSNSASTPK).

Belongs to the SMC family. SMC4 subfamily. As to quaternary structure, component of the condensin I complex, which contains the mix-1/SMC2 and smc-4/SMC4 heterodimer, and three non SMC subunits that probably regulate the complex: dpy-26, capg-1 and dpy-28. Within the complex, interacts with mix-1, dpy-26, capg-1 and dpy-28. Component of the condensin II complex, which contains the mix-1/SMC2 and smc-4/SMC4 heterodimer, and three non SMC subunits, kle-2, capg-2 and hcp-6 that probably regulate the complex. Within the complex, interacts with mix-1, kle-2, capg-2 and hcp-6. Interacts with smcl-1.

It is found in the nucleus. The protein resides in the chromosome. Central component of the condensin I complex, a complex required for conversion of interphase chromatin into mitotic-like condense chromosomes. The condensin I complex introduces positive supercoils into relaxed DNA in the presence of type I topoisomerases. Converts nicked DNA into positive knotted forms in the presence of type II topoisomerases. Also a central component of the condensin II complex, a complex that seems to play a role in prophase chromosome condensation. Both the condensin complex I and II play a role in meiotic and mitotic chromosome segregation. Plays a role in robust cytokinesis upon the presence of chromatin obstructions. The sequence is that of Structural maintenance of chromosomes protein 4 (smc-4) from Caenorhabditis elegans.